The following is a 629-amino-acid chain: Chaperone protein HtpG (629 aa).

The tract at residues 1–336 (MSSTENNGTA…TEDLSLNVSR (336 aa)) is a; substrate-binding. The segment at 337–549 (EMVQSSPVMA…KDAIDSQLER (213 aa)) is b. Positions 550–629 (MMKMMNTPMP…ELIEAATLTR (80 aa)) are c.

The protein belongs to the heat shock protein 90 family. Homodimer.

Its subcellular location is the cytoplasm. Molecular chaperone. Has ATPase activity. This is Chaperone protein HtpG from Chlorobium chlorochromatii (strain CaD3).